A 156-amino-acid chain; its full sequence is 6,7-dimethyl-8-ribityllumazine synthase (156 aa).

5-amino-6-(D-ribitylamino)uracil-binding positions include phenylalanine 22, 56 to 58 (AFE), and 80 to 82 (AVI). 85 to 86 (ST) is a (2S)-2-hydroxy-3-oxobutyl phosphate binding site. Histidine 88 serves as the catalytic Proton donor. Residue phenylalanine 113 participates in 5-amino-6-(D-ribitylamino)uracil binding. A (2S)-2-hydroxy-3-oxobutyl phosphate-binding site is contributed by arginine 127.

The protein belongs to the DMRL synthase family.

The enzyme catalyses (2S)-2-hydroxy-3-oxobutyl phosphate + 5-amino-6-(D-ribitylamino)uracil = 6,7-dimethyl-8-(1-D-ribityl)lumazine + phosphate + 2 H2O + H(+). Its pathway is cofactor biosynthesis; riboflavin biosynthesis; riboflavin from 2-hydroxy-3-oxobutyl phosphate and 5-amino-6-(D-ribitylamino)uracil: step 1/2. In terms of biological role, catalyzes the formation of 6,7-dimethyl-8-ribityllumazine by condensation of 5-amino-6-(D-ribitylamino)uracil with 3,4-dihydroxy-2-butanone 4-phosphate. This is the penultimate step in the biosynthesis of riboflavin. The polypeptide is 6,7-dimethyl-8-ribityllumazine synthase (Caldicellulosiruptor saccharolyticus (strain ATCC 43494 / DSM 8903 / Tp8T 6331)).